The primary structure comprises 334 residues: Homoserine O-acetyltransferase (334 aa).

In terms of domain architecture, AB hydrolase-1 spans 61–318 (LVLHALTGDS…GSIHGHDAFL (258 aa)). The active-site Nucleophile is serine 148. Arginine 205 contributes to the substrate binding site. Active-site residues include aspartate 285 and histidine 314. Aspartate 315 contributes to the substrate binding site.

It belongs to the AB hydrolase superfamily. MetX family. As to quaternary structure, homodimer.

The protein resides in the cytoplasm. The catalysed reaction is L-homoserine + acetyl-CoA = O-acetyl-L-homoserine + CoA. The protein operates within amino-acid biosynthesis; L-methionine biosynthesis via de novo pathway; O-acetyl-L-homoserine from L-homoserine: step 1/1. Functionally, transfers an acetyl group from acetyl-CoA to L-homoserine, forming acetyl-L-homoserine. The protein is Homoserine O-acetyltransferase of Deinococcus radiodurans (strain ATCC 13939 / DSM 20539 / JCM 16871 / CCUG 27074 / LMG 4051 / NBRC 15346 / NCIMB 9279 / VKM B-1422 / R1).